The chain runs to 553 residues: MFCIQCEQTIQTPTTKGCSFAQGMCGKTAEVSDLQDILVYALQGVSFWAEQGRKVNVILDEIDQWAPKAFFATLTNVNFDPERVIEFALQAQDYKQQLEETVRAAATVTNTELDELSPAAKFELPTEADQIIALAPQAAVNRGHETQHEDVIGLRLLCLYGLKGAAAYMEHAHVLGQTDKDVFTEYHQIMAWLGTDPTDLGELLDCSMKIGLMNYRIMEMLDTGETNTFGHPEPSQVNVKTIKGKCILVSGHDLHDLEKILQQTEGKGINVYTNGEMLPAHSYPELKKYPHLVGNYGSAWQNQQKEFANFPGAIVMTSNCLLNPNVGQYADRLFTRSIVGWPGVAHIEGDDFTAVIDCALAQEGFKHNEIEQMITVGFGRNALMAAAPAVVEQVKEGNISHFFLVGGCDGDKSERSYYTDFTAQAPEDSVILTLACGKYRFNKNQFGDINGIPRLLDVGQCNDAYSAIQLALALAKEFDCGINELPLTLVLSWFEQKAIVILLTLFALGVKGIYTGPTAPAFLTDNLLAIIQEKFDMRSIGNVEDDLKAILAA.

4 residues coordinate [2Fe-2S] cluster: C3, C6, C18, and C25. Hybrid [4Fe-2O-2S] cluster-binding residues include H252, E276, C320, C408, C436, C461, E495, and K497. A Cysteine persulfide modification is found at C408.

Belongs to the HCP family. [2Fe-2S] cluster serves as cofactor. Requires hybrid [4Fe-2O-2S] cluster as cofactor.

The protein localises to the cytoplasm. It carries out the reaction A + NH4(+) + H2O = hydroxylamine + AH2 + H(+). In terms of biological role, catalyzes the reduction of hydroxylamine to form NH(3) and H(2)O. This chain is Hydroxylamine reductase, found in Aliivibrio fischeri (strain ATCC 700601 / ES114) (Vibrio fischeri).